Here is a 130-residue protein sequence, read N- to C-terminus: S-adenosylmethionine decarboxylase proenzyme (130 aa).

Catalysis depends on Ser-66, which acts as the Schiff-base intermediate with substrate; via pyruvic acid. Pyruvic acid (Ser); by autocatalysis is present on Ser-66. His-71 acts as the Proton acceptor; for processing activity in catalysis. Cys-86 functions as the Proton donor; for catalytic activity in the catalytic mechanism.

This sequence belongs to the prokaryotic AdoMetDC family. Type 1 subfamily. Heterotetramer of two alpha and two beta chains arranged as a dimer of alpha/beta heterodimers. Requires pyruvate as cofactor. Post-translationally, is synthesized initially as an inactive proenzyme. Formation of the active enzyme involves a self-maturation process in which the active site pyruvoyl group is generated from an internal serine residue via an autocatalytic post-translational modification. Two non-identical subunits are generated from the proenzyme in this reaction, and the pyruvate is formed at the N-terminus of the alpha chain, which is derived from the carboxyl end of the proenzyme. The post-translation cleavage follows an unusual pathway, termed non-hydrolytic serinolysis, in which the side chain hydroxyl group of the serine supplies its oxygen atom to form the C-terminus of the beta chain, while the remainder of the serine residue undergoes an oxidative deamination to produce ammonia and the pyruvoyl group blocking the N-terminus of the alpha chain.

It catalyses the reaction S-adenosyl-L-methionine + H(+) = S-adenosyl 3-(methylsulfanyl)propylamine + CO2. Its pathway is amine and polyamine biosynthesis; S-adenosylmethioninamine biosynthesis; S-adenosylmethioninamine from S-adenosyl-L-methionine: step 1/1. Its function is as follows. Catalyzes the decarboxylation of S-adenosylmethionine to S-adenosylmethioninamine (dcAdoMet), the propylamine donor required for the synthesis of the polyamines spermine and spermidine from the diamine putrescine. This is S-adenosylmethionine decarboxylase proenzyme from Bacillus cytotoxicus (strain DSM 22905 / CIP 110041 / 391-98 / NVH 391-98).